The sequence spans 266 residues: Putative carbamate hydrolase RutD (266 aa).

The protein belongs to the AB hydrolase superfamily. Hydrolase RutD family.

The catalysed reaction is carbamate + 2 H(+) = NH4(+) + CO2. In terms of biological role, involved in pyrimidine catabolism. May facilitate the hydrolysis of carbamate, a reaction that can also occur spontaneously. The polypeptide is Putative carbamate hydrolase RutD (Escherichia coli O7:K1 (strain IAI39 / ExPEC)).